We begin with the raw amino-acid sequence, 76 residues long: Sulfur carrier protein TusA (76 aa).

The active-site Cysteine persulfide intermediate is the cysteine 14.

Belongs to the sulfur carrier protein TusA family. In terms of assembly, interacts with IscS.

The protein resides in the cytoplasm. Its pathway is tRNA modification. In terms of biological role, sulfur carrier protein involved in sulfur trafficking in the cell. Part of a sulfur-relay system required for 2-thiolation during synthesis of 2-thiouridine of the modified wobble base 5-methylaminomethyl-2-thiouridine (mnm(5)s(2)U) in tRNA. Interacts with IscS and stimulates its cysteine desulfurase activity. Accepts an activated sulfur from IscS, which is then transferred to TusD, and thus determines the direction of sulfur flow from IscS to 2-thiouridine formation. Also appears to be involved in sulfur transfer for the biosynthesis of molybdopterin. The chain is Sulfur carrier protein TusA from Buchnera aphidicola subsp. Acyrthosiphon pisum (strain 5A).